A 507-amino-acid polypeptide reads, in one-letter code: MATIRADEISKIIRERIEGYNREVKVVNTGTVLQVGDGIARIHGLDEVMAGELVEFEEGTIGIALNLESNNVGVVLMGDGLMIQEGSSVKATGRIAQIPVSEAYLGRVINALAKPIDGRGEITASESRLIESPAPGIMSRRSVYEPLQTGLIAIDAMIPVGRGQRELIIGDRQTGKTAVATDTILNQQGQNVICVYVAIGQKASSVAQVVTNFQERGAMEYTIVVAETADSPATLQYLAPYTGAALAEYFMYRERHTLIIYDDLSKQAQAYRQMSLLLRRPPGREAYPGDVFYLHSRLLERAAKLSSLLGEGSMTALPIVETQAGDVSAYIPTNVISITDGQIFLSADLFNAGIRPAINVGISVSRVGSAAQIKAMKKVAGKLKLELAQFAELEAFAQFASDLDKATQNQLARGQRLRELLKQPQSAPLTVEEQVMTIYTGTNGYLDSLELDQVRKYLVELRTYVKTNKPEFQEIISSTKTFTEEAEALLKEAIQEQMERFLLQEQA.

170-177 is a binding site for ATP; it reads GDRQTGKT.

It belongs to the ATPase alpha/beta chains family. As to quaternary structure, F-type ATPases have 2 components, CF(1) - the catalytic core - and CF(0) - the membrane proton channel. CF(1) has five subunits: alpha(3), beta(3), gamma(1), delta(1), epsilon(1). CF(0) has four main subunits: a, b, b' and c.

The protein resides in the plastid. It localises to the chloroplast thylakoid membrane. The catalysed reaction is ATP + H2O + 4 H(+)(in) = ADP + phosphate + 5 H(+)(out). In terms of biological role, produces ATP from ADP in the presence of a proton gradient across the membrane. The alpha chain is a regulatory subunit. This chain is ATP synthase subunit alpha, chloroplastic, found in Spinacia oleracea (Spinach).